Consider the following 312-residue polypeptide: Malate dehydrogenase (312 aa).

Residues Gly-7–Gly-13 and Asp-34 each bind NAD(+). The substrate site is built by Arg-81 and Arg-87. Residues Asn-94 and Ile-117–Asn-119 contribute to the NAD(+) site. Substrate-binding residues include Asn-119 and Arg-153. The active-site Proton acceptor is His-177. Met-227 provides a ligand contact to NAD(+).

The protein belongs to the LDH/MDH superfamily. MDH type 1 family. Homodimer.

It catalyses the reaction (S)-malate + NAD(+) = oxaloacetate + NADH + H(+). Its function is as follows. Catalyzes the reversible oxidation of malate to oxaloacetate. The protein is Malate dehydrogenase of Escherichia coli (strain ATCC 8739 / DSM 1576 / NBRC 3972 / NCIMB 8545 / WDCM 00012 / Crooks).